The chain runs to 801 residues: Mitochondrial intermediate peptidase (801 aa).

Residues 1–41 (MKPQLLTPLRRRPWTCRQCLQRLQRLQQQTRRSFETAASPA) constitute a mitochondrion transit peptide. The tract at residues 31–54 (RRSFETAASPAPGHTQVDYIPADA) is disordered. His565 provides a ligand contact to Zn(2+). Glu566 is a catalytic residue. The Zn(2+) site is built by His569 and His572.

It belongs to the peptidase M3 family. It depends on Zn(2+) as a cofactor.

It localises to the mitochondrion matrix. The catalysed reaction is Release of an N-terminal octapeptide as second stage of processing of some proteins imported into the mitochondrion.. Functionally, cleaves proteins, imported into the mitochondrion, to their mature size. While most mitochondrial precursor proteins are processed to the mature form in one step by mitochondrial processing peptidase (MPP), the sequential cleavage by MIP of an octapeptide after initial processing by MPP is a required step for a subgroup of nuclear-encoded precursor proteins destined for the matrix or the inner membrane. The polypeptide is Mitochondrial intermediate peptidase (oct1) (Aspergillus clavatus (strain ATCC 1007 / CBS 513.65 / DSM 816 / NCTC 3887 / NRRL 1 / QM 1276 / 107)).